The following is a 794-amino-acid chain: Solute carrier family 26 member 9 (794 aa).

Topologically, residues 1–70 are cytoplasmic; the sequence is MNKVRPRYII…WLPKYNIKGN (70 aa). A helical membrane pass occupies residues 71 to 96; it reads LLNDALGGISAGTIQIPQGMAFALLA. Residues 97–100 are Extracellular-facing; that stretch reads NLPP. Residues 101-109 traverse the membrane as a helical segment; that stretch reads VNGLYSSFF. Residues 110-129 lie on the Cytoplasmic side of the membrane; sequence PLVVYFFMGGIPQMVPGTFA. Residues 130–142 form a helical membrane-spanning segment; it reads VISIIVGNVCLKL. Topologically, residues 143 to 160 are extracellular; it reads APESHFQNVTSNGTITNI. A helical membrane pass occupies residues 161–189; it reads EAMNTARMHISATLACLTAIIQIALSFVQ. Topologically, residues 190–199 are cytoplasmic; that stretch reads FGFVAIYLSE. A helical transmembrane segment spans residues 200 to 222; it reads SFIRGFMTAAGLQILISVLKYIF. Over 223 to 235 the chain is Extracellular; sequence GVSIPPYSGVLAI. The helical intramembrane region spans 236–244; sequence IYTFIDICK. Residues 245–252 lie on the Extracellular side of the membrane; the sequence is ELPKTNVA. A helical membrane pass occupies residues 253-273; the sequence is SLIFALISTVLLIIVKELNMK. Residues 274-284 are Cytoplasmic-facing; that stretch reads FMHKIRFPIPM. Residues 285–297 traverse the membrane as a helical segment; that stretch reads EIIIVIVATAVSG. At 298 to 332 the chain is on the extracellular side; the sequence is SFKLPERYHMNVVGHIPLGFPSPTVPNVTQWDEMV. A helical transmembrane segment spans residues 333–356; it reads GTAFSLAIVGYVINLAMGRTLGAK. The Cytoplasmic portion of the chain corresponds to 357–363; the sequence is HGFDVDA. The chain crosses the membrane as a helical span at residues 364–377; it reads NQEMLALGSGNFFG. Over 378-388 the chain is Extracellular; sequence SFFFIHVICCA. A helical transmembrane segment spans residues 389-398; the sequence is LSVTLAVDGA. Residues 399–403 are Cytoplasmic-facing; that stretch reads GGKSQ. A helical transmembrane segment spans residues 404–417; that stretch reads IASFFVMMSVMVTI. Topologically, residues 418 to 429 are extracellular; sequence LALGTYLNPLPK. A helical transmembrane segment spans residues 430 to 455; it reads SVLGALIAVNLKNSLKQLSDPFYLWK. Over 456-459 the chain is Cytoplasmic; it reads KSKL. Residues 460–474 traverse the membrane as a helical segment; the sequence is DCLVWLVSFFSTFIL. Over 475-477 the chain is Extracellular; the sequence is GLP. Residues 478 to 496 form a helical membrane-spanning segment; that stretch reads YGLAVGVAFSILVVIFNTQ. Residues 497–794 lie on the Cytoplasmic side of the membrane; sequence FRNGSSLNQV…MFQTEIQTAL (298 aa). The 223-residue stretch at 517 to 739 folds into the STAS domain; that stretch reads VYSKVQPIDG…ITVHDAVLYA (223 aa).

It belongs to the SLC26A/SulP transporter (TC 2.A.53) family. Homodimer.

It is found in the cell membrane. It localises to the endomembrane system. The catalysed reaction is chloride(in) = chloride(out). The enzyme catalyses hydrogencarbonate(in) + chloride(out) = hydrogencarbonate(out) + chloride(in). Inhibited by ammonium and thiosulfate. Its function is as follows. Ion transporter that can act both as an ion channel and anion exchanger. Mainly acts as a chloride channel, which mediate uncoupled chloride anion transport in an alternate-access mechanism where a saturable binding site is alternately exposed to either one or the other side of the membrane. Also acts as a DIDS- and thiosulfate- sensitive anion exchanger the exchange of chloride for bicarbonate ions across the cell membrane. The protein is Solute carrier family 26 member 9 (slc26a9) of Xenopus tropicalis (Western clawed frog).